A 266-amino-acid chain; its full sequence is Glucosamine-6-phosphate deaminase (266 aa).

The active-site Proton acceptor; for enolization step is the Asp-72. The For ring-opening step role is filled by Asp-141. The active-site Proton acceptor; for ring-opening step is the His-143. Residue Glu-148 is the For ring-opening step of the active site.

It belongs to the glucosamine/galactosamine-6-phosphate isomerase family. NagB subfamily. As to quaternary structure, homohexamer; trimer of disulfide-linked dimers.

It carries out the reaction alpha-D-glucosamine 6-phosphate + H2O = beta-D-fructose 6-phosphate + NH4(+). It participates in amino-sugar metabolism; N-acetylneuraminate degradation; D-fructose 6-phosphate from N-acetylneuraminate: step 5/5. Allosterically activated by N-acetylglucosamine 6-phosphate (GlcNAc6P). Its function is as follows. Catalyzes the reversible isomerization-deamination of glucosamine 6-phosphate (GlcN6P) to form fructose 6-phosphate (Fru6P) and ammonium ion. This Shigella dysenteriae serotype 1 (strain Sd197) protein is Glucosamine-6-phosphate deaminase.